The chain runs to 132 residues: Small ribosomal subunit protein uS8 (132 aa).

It belongs to the universal ribosomal protein uS8 family. In terms of assembly, part of the 30S ribosomal subunit. Contacts proteins S5 and S12.

Its function is as follows. One of the primary rRNA binding proteins, it binds directly to 16S rRNA central domain where it helps coordinate assembly of the platform of the 30S subunit. In Borrelia turicatae (strain 91E135), this protein is Small ribosomal subunit protein uS8.